The sequence spans 101 residues: Phosphoribosyl-AMP cyclohydrolase (101 aa).

D71 contacts Mg(2+). C72 contacts Zn(2+). Mg(2+) is bound by residues D73 and D75. Zn(2+) is bound by residues C88 and C95.

The protein belongs to the PRA-CH family. In terms of assembly, homodimer. Requires Mg(2+) as cofactor. It depends on Zn(2+) as a cofactor.

The protein localises to the cytoplasm. The catalysed reaction is 1-(5-phospho-beta-D-ribosyl)-5'-AMP + H2O = 1-(5-phospho-beta-D-ribosyl)-5-[(5-phospho-beta-D-ribosylamino)methylideneamino]imidazole-4-carboxamide. It functions in the pathway amino-acid biosynthesis; L-histidine biosynthesis; L-histidine from 5-phospho-alpha-D-ribose 1-diphosphate: step 3/9. Its function is as follows. Catalyzes the hydrolysis of the adenine ring of phosphoribosyl-AMP. This is Phosphoribosyl-AMP cyclohydrolase from Bacillus cereus (strain G9842).